Here is a 2620-residue protein sequence, read N- to C-terminus: Highly reducing polyketide synthase tazB (2620 aa).

A disordered region spans residues 1–22 (MPFLNGNTTHHEAHSAEPDHGN). The 416-residue stretch at 1–416 (MPFLNGNTTH…GTNAHCILDD (416 aa)) folds into the Ketosynthase family 3 (KS3) domain. The span at 9-22 (THHEAHSAEPDHGN) shows a compositional bias: basic and acidic residues. Catalysis depends on for beta-ketoacyl synthase activity residues cysteine 166, histidine 301, and histidine 340. The tract at residues 460–481 (GFNKFDEPRGSDSAGSNANGSH) is disordered. Over residues 470 to 481 (SDSAGSNANGSH) the composition is skewed to low complexity. The interval 601–923 (VFTGQGAQYA…PYLATLSRKD (323 aa)) is malonyl-CoA:ACP transacylase (MAT) domain. The tract at residues 993–1128 (HDLFGAPVPD…GEVSPDLKKS (136 aa)) is N-terminal hotdog fold. Residues 993-1313 (HDLFGAPVPD…LAGIRLSPFK (321 aa)) form a dehydratase (DH) domain region. The 326-residue stretch at 993–1318 (HDLFGAPVPD…LSPFKPESSE (326 aa)) folds into the PKS/mFAS DH domain. The active-site Proton acceptor; for dehydratase activity is histidine 1025. Residues 1157–1318 (TAPVDFTPVY…LSPFKPESSE (162 aa)) are C-terminal hotdog fold. The active-site Proton donor; for dehydratase activity is the aspartate 1225. Residues 1379 to 1680 (GLRESREMKD…VDFEASSSIY (302 aa)) are methyltransferase (CMet) domain. Residues 1910 to 2227 (GIDSLTWVTD…TGKSIGKVTL (318 aa)) form an enoyl reductase (ER) domain region. Residues 2251–2425 (SFILAGGLGG…HGASVNLGAV (175 aa)) form a ketoreductase (KR) domain region. Positions 2539-2620 (EAARIIHKAL…VSLSSFTKFR (82 aa)) constitute a Carrier domain. Residue serine 2576 is modified to O-(pantetheine 4'-phosphoryl)serine.

Its pathway is secondary metabolite biosynthesis. Functionally, highly reducing polyketide synthase; part of the gene cluster that mediates the biosynthesis of azaterrilone A and other azaphilones, a class of fungal metabolites characterized by a highly oxygenated pyrano-quinone bicyclic core and exhibiting a broad range of bioactivities. The first step of the pathway begins with the non-reducing polyketide synthase tazA that assembles one acetyl-CoA starter unit, five malonyl-CoA units, and catalyzes a series of Claisen condensations, methylation, PT-mediated cyclization, and finally releases the first hexaketide precursor through the R-domain. The tazA product then undergoes reduction on its terminal ketone and the following pyran-ring formation by yet undetermined enzyme(s). Dehydration and enoyl reduction, possibly involving the trans-enoyl reductase tazE leads to the next intermediate. TazD is predicted as an acetyltransferase and might catalyze the acetylation steps leading to the synthesis of azaterrilone A. Azaterrilone A is not the final product of the taz pathway and both the highly reducing polyketide synthase tazB and the dual enzyme tazHJ catalyze late steps of the pathway, leading to the production of the 2 final stereoisomers that contain additional polyketide modification whose structures have still to be determined. The protein is Highly reducing polyketide synthase tazB of Aspergillus terreus (strain NIH 2624 / FGSC A1156).